Consider the following 263-residue polypeptide: Thiazole synthase (263 aa).

Lys-100 acts as the Schiff-base intermediate with DXP in catalysis. 1-deoxy-D-xylulose 5-phosphate-binding positions include Gly-161, 188-189 (AG), and 210-211 (NS).

The protein belongs to the ThiG family. In terms of assembly, homotetramer. Forms heterodimers with either ThiH or ThiS.

Its subcellular location is the cytoplasm. The enzyme catalyses [ThiS sulfur-carrier protein]-C-terminal-Gly-aminoethanethioate + 2-iminoacetate + 1-deoxy-D-xylulose 5-phosphate = [ThiS sulfur-carrier protein]-C-terminal Gly-Gly + 2-[(2R,5Z)-2-carboxy-4-methylthiazol-5(2H)-ylidene]ethyl phosphate + 2 H2O + H(+). It functions in the pathway cofactor biosynthesis; thiamine diphosphate biosynthesis. Catalyzes the rearrangement of 1-deoxy-D-xylulose 5-phosphate (DXP) to produce the thiazole phosphate moiety of thiamine. Sulfur is provided by the thiocarboxylate moiety of the carrier protein ThiS. In vitro, sulfur can be provided by H(2)S. This is Thiazole synthase from Pseudoalteromonas translucida (strain TAC 125).